The chain runs to 410 residues: Chloride intracellular channel protein 5 (410 aa).

The G-site motif lies at 191–194; sequence CPFS. Residues 193 to 213 form a helical membrane-spanning segment; that stretch reads FSQRLFMILWLKGVVFNVTTV. Residues 260-400 enclose the GST C-terminal domain; it reads YPKLAAKHRE…AADSEIELAY (141 aa).

Belongs to the chloride channel CLIC family. Component of a multimeric complex consisting of several cytoskeletal proteins, including actin, ezrin, alpha-actinin, gelsolin, and IQGAP1. Interacts with AKAP9. Interacts with TPRN. TPRN, CLIC5 and PTPQR form concentric rings at the base of stereocilia and may form a complex. Interacts with EZR, MYO6 and RDX; the proteins may work together as a complex to stabilize linkages between the plasma membrane and subjacent actin cytoskeleton at the stereocilium base. In terms of tissue distribution, widely expressed in both fetal and adult human tissues. Isoform 1 is expressed in renal glomeruli endothelial cells and podocytes (at protein level).

Its subcellular location is the cytoplasm. The protein resides in the cytoskeleton. The protein localises to the cell cortex. It localises to the membrane. It is found in the apical cell membrane. Its subcellular location is the mitochondrion. The protein resides in the cell projection. The protein localises to the stereocilium. It localises to the golgi apparatus. It is found in the microtubule organizing center. Its subcellular location is the centrosome. The enzyme catalyses chloride(in) = chloride(out). The catalysed reaction is Na(+)(in) = Na(+)(out). It carries out the reaction K(+)(in) = K(+)(out). Inhibited by F-actin. In terms of biological role, in the soluble state, catalyzes glutaredoxin-like thiol disulfide exchange reactions with reduced glutathione as electron donor. Can insert into membranes and form non-selective ion channels almost equally permeable to Na(+), K(+) and Cl(-). Required for normal hearing. It is necessary for the formation of stereocilia in the inner ear and normal development of the organ of Corti. May play a role in the regulation of transepithelial ion absorption and secretion. Is required for the development and/or maintenance of the proper glomerular endothelial cell and podocyte architecture. Plays a role in formation of the lens suture in the eye, which is important for normal optical properties of the lens. The protein is Chloride intracellular channel protein 5 of Homo sapiens (Human).